Here is a 377-residue protein sequence, read N- to C-terminus: ATP synthase gamma chain, chloroplastic (377 aa).

Residues 1-55 (MSCSNLTMLVSSKPSLSDSSALSFRSSVSPFQLPNHNTSGPSNPSRSSSVTPVHC) constitute a chloroplast transit peptide. Positions 30–52 (PFQLPNHNTSGPSNPSRSSSVTP) are disordered. Positions 37–52 (NTSGPSNPSRSSSVTP) are enriched in low complexity. C143 is an active-site residue. C253 and C259 are disulfide-bonded.

It belongs to the ATPase gamma chain family. In terms of assembly, F-type ATPases have 2 components, CF(1) - the catalytic core - and CF(0) - the membrane proton channel. CF(1) has five subunits: alpha(3), beta(3), gamma(1), delta(1), epsilon(1). CF(0) has four main subunits: a, b, b' and c.

Its subcellular location is the plastid. The protein localises to the chloroplast thylakoid membrane. In terms of biological role, produces ATP from ADP in the presence of a proton gradient across the membrane. The gamma chain is believed to be important in regulating ATPase activity and the flow of protons through the CF(0) complex. The sequence is that of ATP synthase gamma chain, chloroplastic (ATPC) from Nicotiana tabacum (Common tobacco).